A 257-amino-acid polypeptide reads, in one-letter code: Methylthioribulose-1-phosphate dehydratase (257 aa).

The tract at residues 1–33 (MVSSQEKMASISDIIQKDEDSGSEKTESQDKEH) is disordered. The span at 15 to 33 (IQKDEDSGSEKTESQDKEH) shows a compositional bias: basic and acidic residues. C107 lines the substrate pocket. Zn(2+) contacts are provided by H125 and H127. E149 serves as the catalytic Proton donor/acceptor. H205 serves as a coordination point for Zn(2+).

The protein belongs to the aldolase class II family. MtnB subfamily. Requires Zn(2+) as cofactor.

It localises to the cytoplasm. It carries out the reaction 5-(methylsulfanyl)-D-ribulose 1-phosphate = 5-methylsulfanyl-2,3-dioxopentyl phosphate + H2O. It functions in the pathway amino-acid biosynthesis; L-methionine biosynthesis via salvage pathway; L-methionine from S-methyl-5-thio-alpha-D-ribose 1-phosphate: step 2/6. Functionally, catalyzes the dehydration of methylthioribulose-1-phosphate (MTRu-1-P) into 2,3-diketo-5-methylthiopentyl-1-phosphate (DK-MTP-1-P). Functions in the methionine salvage pathway. May play a role in apoptosis. The polypeptide is Methylthioribulose-1-phosphate dehydratase (Esox lucius (Northern pike)).